Reading from the N-terminus, the 318-residue chain is Retinol dehydrogenase 5 (318 aa).

A helical transmembrane segment spans residues 1-23; sequence MWLPLLLGALLWAVLWLLRDRQS. Residues 24–288 lie on the Lumenal side of the membrane; sequence LPASDAFIFI…TRYSPGWDAK (265 aa). NADP(+) is bound at residue 32 to 56; that stretch reads FITGCDSGFGRLLALQLDQKGFQVL. Position 163 (Ser163) interacts with substrate. The active-site Proton acceptor is the Tyr175. The helical transmembrane segment at 289–309 threads the bilayer; it reads LLWLPASYLPARVVDAVLTWI. The Cytoplasmic segment spans residues 310–318; the sequence is LPRPAQSVS.

The protein belongs to the short-chain dehydrogenases/reductases (SDR) family. Homodimer. In terms of tissue distribution, expressed in eye, liver, kidney, brain, intestine, placenta, epididymus and submaxillary gland. In eye, strongly expressed in the retinal pigment epithelium, with lower expression levels detected in the inner segment of the photoreceptor cells and in the outer plexiform layer. In kidney, strong expression detected in the distal tubules and the transitional epithelium in the renal pelvis, with weaker expression detected in the epithelium of the outer stripe of the outer zone of the medulla. In liver, detected in hepatocytes in the centrilobular area. In lung, present in club cells in the epithelium of the bronchiole, in parenchyma and in cartilage surrounding the secondary bronchi. In skin, expressed in epidermis, hair follicles and mast cells in the dermis. Expressed in heart. Not detected in heart. Not detected in lung, spleen, skeletal muscle and testis.

The protein resides in the endoplasmic reticulum membrane. The enzyme catalyses 11-cis-retinol + NAD(+) = 11-cis-retinal + NADH + H(+). It catalyses the reaction 9-cis-retinol + NAD(+) = 9-cis-retinal + NADH + H(+). It carries out the reaction 13-cis-retinol + NAD(+) = 13-cis-retinal + NADH + H(+). The catalysed reaction is androsterone + NAD(+) = 5alpha-androstan-3,17-dione + NADH + H(+). The enzyme catalyses 5alpha-androstane-3alpha,17beta-diol + NAD(+) = 17beta-hydroxy-5alpha-androstan-3-one + NADH + H(+). It participates in cofactor metabolism; retinol metabolism. With respect to regulation, inhibited by 9-cis-, 13-cis- and all-trans-retinoic acids, with the most potent inhibitor being 13-cis-retinoic acid. Weakly inhibited by oleic acid. Catalyzes the oxidation of cis-isomers of retinol, including 11-cis-, 9-cis-, and 13-cis-retinol in an NAD-dependent manner. Has no activity towards all-trans retinal. Plays a significant role in 11-cis retinol oxidation in the retinal pigment epithelium cells (RPE). Also recognizes steroids (androsterone, androstanediol) as its substrates. This chain is Retinol dehydrogenase 5, found in Mus musculus (Mouse).